A 25-amino-acid polypeptide reads, in one-letter code: Cysteine protease inhibitor 2 (25 aa).

It belongs to the protease inhibitor I3 (leguminous Kunitz-type inhibitor) family. In terms of tissue distribution, cortex of tuber.

Functionally, inhibitor of subtilisin. Inhibits moderately trypsin and chymotrypsin (serine proteases). May protect the plant by inhibiting proteases of invading organisms. The protein is Cysteine protease inhibitor 2 of Solanum tuberosum (Potato).